Here is a 417-residue protein sequence, read N- to C-terminus: NADH-quinone oxidoreductase subunit D (417 aa).

The protein belongs to the complex I 49 kDa subunit family. As to quaternary structure, NDH-1 is composed of 14 different subunits. Subunits NuoB, C, D, E, F, and G constitute the peripheral sector of the complex.

It is found in the cell inner membrane. It catalyses the reaction a quinone + NADH + 5 H(+)(in) = a quinol + NAD(+) + 4 H(+)(out). Its function is as follows. NDH-1 shuttles electrons from NADH, via FMN and iron-sulfur (Fe-S) centers, to quinones in the respiratory chain. The immediate electron acceptor for the enzyme in this species is believed to be ubiquinone. Couples the redox reaction to proton translocation (for every two electrons transferred, four hydrogen ions are translocated across the cytoplasmic membrane), and thus conserves the redox energy in a proton gradient. In Acidovorax sp. (strain JS42), this protein is NADH-quinone oxidoreductase subunit D.